The following is a 312-amino-acid chain: DNA-directed RNA polymerase subunit alpha (312 aa).

The interval 1–226 (MIEFEKPIIT…EHLNLFTDLT (226 aa)) is alpha N-terminal domain (alpha-NTD). The tract at residues 242–312 (NDEKLLDRTI…DLGLGLKNDK (71 aa)) is alpha C-terminal domain (alpha-CTD).

This sequence belongs to the RNA polymerase alpha chain family. In terms of assembly, homodimer. The RNAP catalytic core consists of 2 alpha, 1 beta, 1 beta' and 1 omega subunit. When a sigma factor is associated with the core the holoenzyme is formed, which can initiate transcription.

It catalyses the reaction RNA(n) + a ribonucleoside 5'-triphosphate = RNA(n+1) + diphosphate. DNA-dependent RNA polymerase catalyzes the transcription of DNA into RNA using the four ribonucleoside triphosphates as substrates. The polypeptide is DNA-directed RNA polymerase subunit alpha (Streptococcus thermophilus (strain CNRZ 1066)).